The chain runs to 156 residues: Endoribonuclease YbeY (156 aa).

Zn(2+) contacts are provided by H122, H126, and H132.

The protein belongs to the endoribonuclease YbeY family. It depends on Zn(2+) as a cofactor.

The protein localises to the cytoplasm. Its function is as follows. Single strand-specific metallo-endoribonuclease involved in late-stage 70S ribosome quality control and in maturation of the 3' terminus of the 16S rRNA. The polypeptide is Endoribonuclease YbeY (Geobacillus kaustophilus (strain HTA426)).